Consider the following 421-residue polypeptide: C4-dicarboxylate transport protein (421 aa).

The next 8 helical transmembrane spans lie at 9–29, 39–59, 76–96, 145–165, 185–205, 219–239, 316–336, and 348–368; these read VQVI…PDVG, FINA…VLGI, FIYF…VVNI, GDIL…AALG, IIGY…AYTI, LMMS…NIIC, VFGV…LMLT, and FIVL…GLAL.

The protein belongs to the dicarboxylate/amino acid:cation symporter (DAACS) (TC 2.A.23) family.

It is found in the cell membrane. Functionally, responsible for the transport of succinate and fumarate, but not malate, across the membrane. The protein is C4-dicarboxylate transport protein (dctA) of Bacillus subtilis (strain 168).